A 412-amino-acid polypeptide reads, in one-letter code: CCA-adding enzyme (412 aa).

Residues S41 and K44 each contribute to the ATP site. CTP is bound by residues S41 and K44. Residues D53, D55, and D106 each coordinate Mg(2+). Positions 129, 149, and 158 each coordinate ATP. CTP is bound by residues H129, K149, and Y158.

This sequence belongs to the tRNA nucleotidyltransferase/poly(A) polymerase family. Archaeal CCA-adding enzyme subfamily. In terms of assembly, homodimer. Forms a tetramer upon binding two tRNAs. However, tRNA-induced tetramer formation is not required for CCA addition. Mg(2+) serves as cofactor.

It catalyses the reaction a tRNA precursor + 2 CTP + ATP = a tRNA with a 3' CCA end + 3 diphosphate. The catalysed reaction is a tRNA with a 3' CCA end + 2 CTP + ATP = a tRNA with a 3' CCACCA end + 3 diphosphate. Catalyzes the addition and repair of the essential 3'-terminal CCA sequence in tRNAs without using a nucleic acid template. Adds these three nucleotides in the order of C, C, and A to the tRNA nucleotide-73, using CTP and ATP as substrates and producing inorganic pyrophosphate. tRNA 3'-terminal CCA addition is required both for tRNA processing and repair. Also involved in tRNA surveillance by mediating tandem CCA addition to generate a CCACCA at the 3' terminus of unstable tRNAs. While stable tRNAs receive only 3'-terminal CCA, unstable tRNAs are marked with CCACCA and rapidly degraded. The structural flexibility of RNA controls the choice between CCA versus CCACCA addition: following the first CCA addition cycle, nucleotide-binding to the active site triggers a clockwise screw motion, producing torque on the RNA. This ejects stable RNAs, whereas unstable RNAs are refolded while bound to the enzyme and subjected to a second CCA catalytic cycle. In Saccharolobus shibatae (strain ATCC 51178 / DSM 5389 / JCM 8931 / NBRC 15437 / B12) (Sulfolobus shibatae), this protein is CCA-adding enzyme.